We begin with the raw amino-acid sequence, 428 residues long: Adenosylmethionine-8-amino-7-oxononanoate aminotransferase (428 aa).

Residue tryptophan 52 participates in substrate binding. Residue 112–113 (GS) participates in pyridoxal 5'-phosphate binding. Residue tyrosine 144 participates in substrate binding. Aspartate 245 serves as a coordination point for pyridoxal 5'-phosphate. Positions 274 and 307 each coordinate substrate. Lysine 274 is modified (N6-(pyridoxal phosphate)lysine). 308-309 (PT) lines the pyridoxal 5'-phosphate pocket. Arginine 391 is a binding site for substrate.

It belongs to the class-III pyridoxal-phosphate-dependent aminotransferase family. BioA subfamily. Homodimer. Pyridoxal 5'-phosphate is required as a cofactor.

It is found in the cytoplasm. The enzyme catalyses (8S)-8-amino-7-oxononanoate + S-adenosyl-L-methionine = S-adenosyl-4-methylsulfanyl-2-oxobutanoate + (7R,8S)-7,8-diammoniononanoate. Its pathway is cofactor biosynthesis; biotin biosynthesis; 7,8-diaminononanoate from 8-amino-7-oxononanoate (SAM route): step 1/1. Its function is as follows. Catalyzes the transfer of the alpha-amino group from S-adenosyl-L-methionine (SAM) to 7-keto-8-aminopelargonic acid (KAPA) to form 7,8-diaminopelargonic acid (DAPA). It is the only aminotransferase known to utilize SAM as an amino donor. In Buchnera aphidicola subsp. Acyrthosiphon pisum (strain APS) (Acyrthosiphon pisum symbiotic bacterium), this protein is Adenosylmethionine-8-amino-7-oxononanoate aminotransferase.